The chain runs to 240 residues: Fimbriae Y protein (240 aa).

The protein resides in the fimbrium. The chain is Fimbriae Y protein (fimY) from Salmonella typhimurium (strain LT2 / SGSC1412 / ATCC 700720).